Consider the following 337-residue polypeptide: Holliday junction branch migration complex subunit RuvB (337 aa).

Residues Met1 to Tyr181 are large ATPase domain (RuvB-L). Residues Leu20, Arg21, Gly62, Lys65, Thr66, Thr67, Glu128–Phe130, Arg171, Tyr181, and Arg218 contribute to the ATP site. Thr66 is a Mg(2+) binding site. The interval Ser182–Gly252 is small ATPAse domain (RuvB-S). The interval Ser255–Phe337 is head domain (RuvB-H). DNA contacts are provided by Arg309 and Arg314.

This sequence belongs to the RuvB family. In terms of assembly, homohexamer. Forms an RuvA(8)-RuvB(12)-Holliday junction (HJ) complex. HJ DNA is sandwiched between 2 RuvA tetramers; dsDNA enters through RuvA and exits via RuvB. An RuvB hexamer assembles on each DNA strand where it exits the tetramer. Each RuvB hexamer is contacted by two RuvA subunits (via domain III) on 2 adjacent RuvB subunits; this complex drives branch migration. In the full resolvosome a probable DNA-RuvA(4)-RuvB(12)-RuvC(2) complex forms which resolves the HJ.

The protein localises to the cytoplasm. It carries out the reaction ATP + H2O = ADP + phosphate + H(+). Its function is as follows. The RuvA-RuvB-RuvC complex processes Holliday junction (HJ) DNA during genetic recombination and DNA repair, while the RuvA-RuvB complex plays an important role in the rescue of blocked DNA replication forks via replication fork reversal (RFR). RuvA specifically binds to HJ cruciform DNA, conferring on it an open structure. The RuvB hexamer acts as an ATP-dependent pump, pulling dsDNA into and through the RuvAB complex. RuvB forms 2 homohexamers on either side of HJ DNA bound by 1 or 2 RuvA tetramers; 4 subunits per hexamer contact DNA at a time. Coordinated motions by a converter formed by DNA-disengaged RuvB subunits stimulates ATP hydrolysis and nucleotide exchange. Immobilization of the converter enables RuvB to convert the ATP-contained energy into a lever motion, pulling 2 nucleotides of DNA out of the RuvA tetramer per ATP hydrolyzed, thus driving DNA branch migration. The RuvB motors rotate together with the DNA substrate, which together with the progressing nucleotide cycle form the mechanistic basis for DNA recombination by continuous HJ branch migration. Branch migration allows RuvC to scan DNA until it finds its consensus sequence, where it cleaves and resolves cruciform DNA. This Sulfurimonas denitrificans (strain ATCC 33889 / DSM 1251) (Thiomicrospira denitrificans (strain ATCC 33889 / DSM 1251)) protein is Holliday junction branch migration complex subunit RuvB.